Consider the following 474-residue polypeptide: Bifunctional protein HldE (474 aa).

Positions 1–317 are ribokinase; that stretch reads MKLSMPRFDQ…RRAIQRSEGS (317 aa). 194–197 is a binding site for ATP; sequence NLSE. Asp-263 is a catalytic residue. The tract at residues 343-474 is cytidylyltransferase; that stretch reads FTNGCFDILH…AIVEKIRNNE (132 aa).

It in the N-terminal section; belongs to the carbohydrate kinase PfkB family. This sequence in the C-terminal section; belongs to the cytidylyltransferase family. In terms of assembly, homodimer.

It carries out the reaction D-glycero-beta-D-manno-heptose 7-phosphate + ATP = D-glycero-beta-D-manno-heptose 1,7-bisphosphate + ADP + H(+). The catalysed reaction is D-glycero-beta-D-manno-heptose 1-phosphate + ATP + H(+) = ADP-D-glycero-beta-D-manno-heptose + diphosphate. The protein operates within nucleotide-sugar biosynthesis; ADP-L-glycero-beta-D-manno-heptose biosynthesis; ADP-L-glycero-beta-D-manno-heptose from D-glycero-beta-D-manno-heptose 7-phosphate: step 1/4. It functions in the pathway nucleotide-sugar biosynthesis; ADP-L-glycero-beta-D-manno-heptose biosynthesis; ADP-L-glycero-beta-D-manno-heptose from D-glycero-beta-D-manno-heptose 7-phosphate: step 3/4. Functionally, catalyzes the phosphorylation of D-glycero-D-manno-heptose 7-phosphate at the C-1 position to selectively form D-glycero-beta-D-manno-heptose-1,7-bisphosphate. In terms of biological role, catalyzes the ADP transfer from ATP to D-glycero-beta-D-manno-heptose 1-phosphate, yielding ADP-D-glycero-beta-D-manno-heptose. The protein is Bifunctional protein HldE of Pseudomonas fluorescens (strain SBW25).